A 384-amino-acid chain; its full sequence is Movement protein TGB1 (384 aa).

Residues 1–36 (MVQVQRRTGGDKGAKGNRASSAPVRSRRMTQDDWSR) are disordered. The region spanning 88–238 (GKNCDLTCNA…NYNFPIIAEC (151 aa)) is the (+)RNA virus helicase ATP-binding domain. 123–130 (GAPGVGKS) contributes to the ATP binding site. One can recognise a (+)RNA virus helicase C-terminal domain in the interval 239 to 384 (YASRRFGKAT…CTGDTFCEDR (146 aa)).

This sequence belongs to the virgaviridae/benyvirus TGB1 movement protein family. In terms of assembly, homooligomer. Interacts with movement protein TGB3.

The protein localises to the host cell junction. It is found in the host plasmodesma. Functionally, transports viral genome to neighboring plant cells directly through plasmodesmata, without any budding. The movement protein allows efficient cell to cell propagation, by bypassing the host cell wall barrier. Engages in homologous interactions leading to the formation of a ribonucleoprotein complex containing viral genomic and messenger RNAs (vRNPs). TGBp2 and TGBp3 are necessary for intracellular delivery of TGBp1-containing vRNPs to plasmodesmata. This chain is Movement protein TGB1, found in Beet necrotic yellow vein virus (isolate Japan/S) (BNYVV).